The primary structure comprises 557 residues: Copine-4 (557 aa).

2 C2 domains span residues K3 to L131 and T137 to E264. Residues D170, D176, D232, D234, and D240 each coordinate Ca(2+). Residues Q305–P507 form the VWFA domain.

This sequence belongs to the copine family. In terms of assembly, interacts (via VWFA domain) with ACTB, BCOR, BICD2, CCDC22, CDC42BPB, CEP162, MYCBP2, NONO, PDCD6, PITPNM2, RDX, SKIL, SKT, SPTBN1, UBE2O and WTAP. The cofactor is Ca(2+).

In terms of biological role, probable calcium-dependent phospholipid-binding protein that may play a role in calcium-mediated intracellular processes. This Mus musculus (Mouse) protein is Copine-4.